Here is a 1027-residue protein sequence, read N- to C-terminus: Pro-apoptotic serine protease nma111 (1027 aa).

A disordered region spans residues M1–Y46. Residues S31–N42 are compositionally biased toward polar residues. Positions V81–D265 are serine protease. Catalysis depends on charge relay system residues H119, D150, and S232. 2 PDZ domains span residues Q288 to Q373 and V875 to D956. A disordered region spans residues H991–E1027.

It belongs to the peptidase S1C family.

It localises to the nucleus. In terms of biological role, nuclear serine protease which mediates apoptosis. The polypeptide is Pro-apoptotic serine protease nma111 (nma111) (Aspergillus oryzae (strain ATCC 42149 / RIB 40) (Yellow koji mold)).